The following is a 51-amino-acid chain: Ribosome biogenesis protein Nop10 (51 aa).

It belongs to the NOP10 family.

In terms of biological role, involved in ribosome biogenesis; more specifically in 18S rRNA pseudouridylation and in cleavage of pre-rRNA. The chain is Ribosome biogenesis protein Nop10 from Methanococcus maripaludis (strain C7 / ATCC BAA-1331).